We begin with the raw amino-acid sequence, 368 residues long: Histidinol-phosphate aminotransferase (368 aa).

An N6-(pyridoxal phosphate)lysine modification is found at lysine 228.

It belongs to the class-II pyridoxal-phosphate-dependent aminotransferase family. Histidinol-phosphate aminotransferase subfamily. Pyridoxal 5'-phosphate serves as cofactor.

The catalysed reaction is L-histidinol phosphate + 2-oxoglutarate = 3-(imidazol-4-yl)-2-oxopropyl phosphate + L-glutamate. It participates in amino-acid biosynthesis; L-histidine biosynthesis; L-histidine from 5-phospho-alpha-D-ribose 1-diphosphate: step 7/9. This is Histidinol-phosphate aminotransferase from Methanosarcina mazei (strain ATCC BAA-159 / DSM 3647 / Goe1 / Go1 / JCM 11833 / OCM 88) (Methanosarcina frisia).